A 430-amino-acid chain; its full sequence is Tol-Pal system protein TolB (430 aa).

The N-terminal stretch at 1–21 is a signal peptide; sequence MKQALRVAFGFLMLWAAVLHA.

This sequence belongs to the TolB family. In terms of assembly, the Tol-Pal system is composed of five core proteins: the inner membrane proteins TolA, TolQ and TolR, the periplasmic protein TolB and the outer membrane protein Pal. They form a network linking the inner and outer membranes and the peptidoglycan layer.

It is found in the periplasm. In terms of biological role, part of the Tol-Pal system, which plays a role in outer membrane invagination during cell division and is important for maintaining outer membrane integrity. TolB occupies a key intermediary position in the Tol-Pal system because it communicates directly with both membrane-embedded components, Pal in the outer membrane and TolA in the inner membrane. The sequence is that of Tol-Pal system protein TolB from Klebsiella pneumoniae (strain 342).